The following is a 317-amino-acid chain: Transcriptional regulator LsrR (317 aa).

Positions 33-56 form a DNA-binding region, H-T-H motif; it reads QSEISDRLGLTRLKVSRLLEKGHQ.

Belongs to the SorC transcriptional regulatory family.

It localises to the cytoplasm. Its activity is regulated as follows. Inactivated by phosphorylated autoinducer-2 (phospho-AI-2). Phospho-AI-2 acts by binding to LsrR, which is then unable to bind to the promoter regions, allowing the transcription of the target genes. Its function is as follows. Transcriptional regulator that represses the expression of the lsr operon in the absence of the quorum-sensing signaling molecule autoinducer 2 (AI-2). It also represses the expression of the lsrRK operon. Acts by binding directly to the lsrA and lsrR promoter regions. In the presence of phosphorylated autoinducer-2 (phospho-AI-2), LsrR is inactivated, leading to the transcription of the genes. This chain is Transcriptional regulator LsrR (lsrR), found in Escherichia coli O139:H28 (strain E24377A / ETEC).